The chain runs to 252 residues: 5-oxoprolinase subunit A (252 aa).

It belongs to the LamB/PxpA family. Forms a complex composed of PxpA, PxpB and PxpC.

The enzyme catalyses 5-oxo-L-proline + ATP + 2 H2O = L-glutamate + ADP + phosphate + H(+). Functionally, catalyzes the cleavage of 5-oxoproline to form L-glutamate coupled to the hydrolysis of ATP to ADP and inorganic phosphate. The polypeptide is 5-oxoprolinase subunit A (Staphylococcus carnosus (strain TM300)).